A 397-amino-acid chain; its full sequence is MAVSAYTVPTTSHLGFNQKKQLFFCNKSAYKRVSFSSRPCVITCLAGDSQTIVIGLAADSGCGKSTFMRRLTSVFGGAAEPPRGGNPDSNTLISDTTTVICLDDYHSLDRTGRKEKGVTALDPRANDFDLMYEQVKALKEGKAVEKPIYNHVTGLLDAPELIKPPKILVIEGLHPMFDSRVRDLLDFSIYLDISNEVKFAWKIQRDMAERGHSLESIKASIEARKPDFDAYIDPQKQYADAVIEVLPTQLIPGDNEGKVLRVRLIQKEGVQYFSPVYLFDEGSSITWIPCGRKLTCSYPGIKFFYGPDTYFGNEVTVLEMDGQFDRLDELIYVESHLSNLSTKFYGEVTQQMLKHQDFPGSNNGTGLFQTIVGLKIRDLFEQLIASKTAAPAAATKA.

The transit peptide at 1–44 directs the protein to the chloroplast; sequence MAVSAYTVPTTSHLGFNQKKQLFFCNKSAYKRVSFSSRPCVITC. Cys62 and Cys101 are oxidised to a cystine.

Belongs to the phosphoribulokinase family.

The protein resides in the plastid. It is found in the chloroplast. It catalyses the reaction D-ribulose 5-phosphate + ATP = D-ribulose 1,5-bisphosphate + ADP + H(+). It participates in carbohydrate biosynthesis; Calvin cycle. Light regulated via thioredoxin by reversible oxidation/reduction of sulfhydryl/disulfide groups. The chain is Phosphoribulokinase, chloroplastic from Mesembryanthemum crystallinum (Common ice plant).